Reading from the N-terminus, the 173-residue chain is RNA pyrophosphohydrolase (173 aa).

A Nudix hydrolase domain is found at 6–149 (GYRPNVGIIL…KRHVYRRALR (144 aa)). Residues 38–59 (GGIRRDESPLDAMYRELAEETG) carry the Nudix box motif.

This sequence belongs to the Nudix hydrolase family. RppH subfamily. Requires a divalent metal cation as cofactor.

In terms of biological role, accelerates the degradation of transcripts by removing pyrophosphate from the 5'-end of triphosphorylated RNA, leading to a more labile monophosphorylated state that can stimulate subsequent ribonuclease cleavage. The chain is RNA pyrophosphohydrolase from Thioalkalivibrio sulfidiphilus (strain HL-EbGR7).